A 238-amino-acid chain; its full sequence is Ribonuclease PH (238 aa).

Residues Arg86 and 124–126 contribute to the phosphate site; that span reads GTR.

Belongs to the RNase PH family. In terms of assembly, homohexameric ring arranged as a trimer of dimers.

It catalyses the reaction tRNA(n+1) + phosphate = tRNA(n) + a ribonucleoside 5'-diphosphate. Phosphorolytic 3'-5' exoribonuclease that plays an important role in tRNA 3'-end maturation. Removes nucleotide residues following the 3'-CCA terminus of tRNAs; can also add nucleotides to the ends of RNA molecules by using nucleoside diphosphates as substrates, but this may not be physiologically important. Probably plays a role in initiation of 16S rRNA degradation (leading to ribosome degradation) during starvation. The sequence is that of Ribonuclease PH from Parvibaculum lavamentivorans (strain DS-1 / DSM 13023 / NCIMB 13966).